The primary structure comprises 329 residues: D-alanine--D-alanine ligase (329 aa).

Residues 120–326 (KLWLSAIGIP…FAHYLEQILR (207 aa)) form the ATP-grasp domain. An ATP-binding site is contributed by 150 to 205 (ALAKWGKVFIKAASQGSSVGCYSASNETDLLQGIKDAFGYSEQVLIEKAVKPRELE). Residues aspartate 280, glutamate 293, and asparagine 295 each contribute to the Mg(2+) site.

It belongs to the D-alanine--D-alanine ligase family. It depends on Mg(2+) as a cofactor. Requires Mn(2+) as cofactor.

Its subcellular location is the cytoplasm. The enzyme catalyses 2 D-alanine + ATP = D-alanyl-D-alanine + ADP + phosphate + H(+). It functions in the pathway cell wall biogenesis; peptidoglycan biosynthesis. Functionally, cell wall formation. The sequence is that of D-alanine--D-alanine ligase from Aeromonas salmonicida (strain A449).